The chain runs to 442 residues: Serine--tRNA ligase (442 aa).

An L-serine-binding site is contributed by 244–246 (TAE). 275-277 (RAE) lines the ATP pocket. E298 serves as a coordination point for L-serine. 365 to 368 (EISS) serves as a coordination point for ATP. S400 is an L-serine binding site.

It belongs to the class-II aminoacyl-tRNA synthetase family. Type-1 seryl-tRNA synthetase subfamily. As to quaternary structure, homodimer. The tRNA molecule binds across the dimer.

Its subcellular location is the cytoplasm. It carries out the reaction tRNA(Ser) + L-serine + ATP = L-seryl-tRNA(Ser) + AMP + diphosphate + H(+). The enzyme catalyses tRNA(Sec) + L-serine + ATP = L-seryl-tRNA(Sec) + AMP + diphosphate + H(+). The protein operates within aminoacyl-tRNA biosynthesis; selenocysteinyl-tRNA(Sec) biosynthesis; L-seryl-tRNA(Sec) from L-serine and tRNA(Sec): step 1/1. Its function is as follows. Catalyzes the attachment of serine to tRNA(Ser). Is also able to aminoacylate tRNA(Sec) with serine, to form the misacylated tRNA L-seryl-tRNA(Sec), which will be further converted into selenocysteinyl-tRNA(Sec). This chain is Serine--tRNA ligase, found in Bradyrhizobium sp. (strain BTAi1 / ATCC BAA-1182).